A 140-amino-acid chain; its full sequence is Putative pre-16S rRNA nuclease (140 aa).

The protein belongs to the YqgF nuclease family.

The protein resides in the cytoplasm. Functionally, could be a nuclease involved in processing of the 5'-end of pre-16S rRNA. The polypeptide is Putative pre-16S rRNA nuclease (Halalkalibacterium halodurans (strain ATCC BAA-125 / DSM 18197 / FERM 7344 / JCM 9153 / C-125) (Bacillus halodurans)).